The following is a 372-amino-acid chain: Dual-specificity RNA methyltransferase RlmN (372 aa).

The active-site Proton acceptor is the Glu-97. A Radical SAM core domain is found at 103–340 (ETDRKTLCVS…AVVRKNRGTD (238 aa)). Cys-110 and Cys-345 are oxidised to a cystine. The [4Fe-4S] cluster site is built by Cys-117, Cys-121, and Cys-124. S-adenosyl-L-methionine contacts are provided by residues 172–173 (GE), Ser-204, 226–228 (SLN), and Asn-302. Cys-345 acts as the S-methylcysteine intermediate in catalysis. The disordered stretch occupies residues 350 to 372 (AEGGPGDPRRRAAAALTGTPAAG). The span at 362 to 372 (AAALTGTPAAG) shows a compositional bias: low complexity.

Belongs to the radical SAM superfamily. RlmN family. [4Fe-4S] cluster is required as a cofactor.

It localises to the cytoplasm. It carries out the reaction adenosine(2503) in 23S rRNA + 2 reduced [2Fe-2S]-[ferredoxin] + 2 S-adenosyl-L-methionine = 2-methyladenosine(2503) in 23S rRNA + 5'-deoxyadenosine + L-methionine + 2 oxidized [2Fe-2S]-[ferredoxin] + S-adenosyl-L-homocysteine. The enzyme catalyses adenosine(37) in tRNA + 2 reduced [2Fe-2S]-[ferredoxin] + 2 S-adenosyl-L-methionine = 2-methyladenosine(37) in tRNA + 5'-deoxyadenosine + L-methionine + 2 oxidized [2Fe-2S]-[ferredoxin] + S-adenosyl-L-homocysteine. In terms of biological role, specifically methylates position 2 of adenine 2503 in 23S rRNA and position 2 of adenine 37 in tRNAs. m2A2503 modification seems to play a crucial role in the proofreading step occurring at the peptidyl transferase center and thus would serve to optimize ribosomal fidelity. This Anaeromyxobacter dehalogenans (strain 2CP-C) protein is Dual-specificity RNA methyltransferase RlmN.